The sequence spans 552 residues: Formate--tetrahydrofolate ligase (552 aa).

65-72 contacts ATP; that stretch reads TPAGEGKT.

It belongs to the formate--tetrahydrofolate ligase family.

It catalyses the reaction (6S)-5,6,7,8-tetrahydrofolate + formate + ATP = (6R)-10-formyltetrahydrofolate + ADP + phosphate. The protein operates within one-carbon metabolism; tetrahydrofolate interconversion. The protein is Formate--tetrahydrofolate ligase of Fervidobacterium nodosum (strain ATCC 35602 / DSM 5306 / Rt17-B1).